The sequence spans 426 residues: uncharacterized protein (426 aa).

Residues 1–23 (MKKFILFLIILLFSIYFLNVSSA) form the signal peptide.

This is an uncharacterized protein from Methanocaldococcus jannaschii (strain ATCC 43067 / DSM 2661 / JAL-1 / JCM 10045 / NBRC 100440) (Methanococcus jannaschii).